The chain runs to 240 residues: Small ribosomal subunit protein uS2 (240 aa).

Belongs to the universal ribosomal protein uS2 family.

This Haemophilus influenzae (strain 86-028NP) protein is Small ribosomal subunit protein uS2.